A 205-amino-acid chain; its full sequence is uncharacterized protein (205 aa).

The HTH tetR-type domain occupies 11 to 71 (KTRRALVDAA…EMVDEAGLML (61 aa)).

This is an uncharacterized protein from Haemophilus influenzae (strain ATCC 51907 / DSM 11121 / KW20 / Rd).